We begin with the raw amino-acid sequence, 355 residues long: Methylthioribose-1-phosphate isomerase (355 aa).

Substrate is bound by residues 53–55 (RGA), R96, and Q205. Catalysis depends on D246, which acts as the Proton donor. Residue 256–257 (NK) coordinates substrate.

This sequence belongs to the eIF-2B alpha/beta/delta subunits family. MtnA subfamily.

The catalysed reaction is 5-(methylsulfanyl)-alpha-D-ribose 1-phosphate = 5-(methylsulfanyl)-D-ribulose 1-phosphate. It participates in amino-acid biosynthesis; L-methionine biosynthesis via salvage pathway; L-methionine from S-methyl-5-thio-alpha-D-ribose 1-phosphate: step 1/6. Catalyzes the interconversion of methylthioribose-1-phosphate (MTR-1-P) into methylthioribulose-1-phosphate (MTRu-1-P). This is Methylthioribose-1-phosphate isomerase from Thermosynechococcus vestitus (strain NIES-2133 / IAM M-273 / BP-1).